The sequence spans 136 residues: Large ribosomal subunit protein eL27A (136 aa).

This sequence belongs to the eukaryotic ribosomal protein eL27 family. In terms of assembly, component of the large ribosomal subunit (LSU). Mature yeast ribosomes consist of a small (40S) and a large (60S) subunit. The 40S small subunit contains 1 molecule of ribosomal RNA (18S rRNA) and at least 33 different proteins. The large 60S subunit contains 3 rRNA molecules (25S, 5.8S and 5S rRNA) and at least 46 different proteins.

Its subcellular location is the cytoplasm. It is found in the nucleus. Its function is as follows. Component of the ribosome, a large ribonucleoprotein complex responsible for the synthesis of proteins in the cell. The small ribosomal subunit (SSU) binds messenger RNAs (mRNAs) and translates the encoded message by selecting cognate aminoacyl-transfer RNA (tRNA) molecules. The large subunit (LSU) contains the ribosomal catalytic site termed the peptidyl transferase center (PTC), which catalyzes the formation of peptide bonds, thereby polymerizing the amino acids delivered by tRNAs into a polypeptide chain. The nascent polypeptides leave the ribosome through a tunnel in the LSU and interact with protein factors that function in enzymatic processing, targeting, and the membrane insertion of nascent chains at the exit of the ribosomal tunnel. This Schizosaccharomyces pombe (strain 972 / ATCC 24843) (Fission yeast) protein is Large ribosomal subunit protein eL27A (rpl2701).